A 452-amino-acid polypeptide reads, in one-letter code: Transcription factor AP-2-delta (452 aa).

At Ser239 the chain carries Phosphoserine; by PKA. The segment at 280 to 410 is H-S-H (helix-span-helix), dimerization; sequence RRKAANVTLL…VLSEMLNYLE (131 aa). The tract at residues 416 to 452 is disordered; the sequence is KNGGAADSGQGHANSEKAPLRKTSEAAVKEGKTEKTD. The span at 429–452 shows a compositional bias: basic and acidic residues; sequence NSEKAPLRKTSEAAVKEGKTEKTD.

This sequence belongs to the AP-2 family. In terms of assembly, binds DNA as a dimer. Can form homodimers or heterodimers with other AP-2 family members. As to expression, highly expressed in brain, placenta, skeletal muscle, thymus, small intestine, and prostate, and expressed at lower levels in leukocyte, spleen, testis, ovary and colon. Barely detectable in heart, kidney, liver, lung or pancreas.

Its subcellular location is the nucleus. Its function is as follows. Sequence-specific DNA-binding protein that interacts with inducible viral and cellular enhancer elements to regulate transcription of selected genes. AP-2 factors bind to the consensus sequence 5'-GCCNNNGGC-3' and activate genes involved in a large spectrum of important biological functions including proper eye, face, body wall, limb and neural tube development. They also suppress a number of genes including MCAM/MUC18, C/EBP alpha and MYC. In Homo sapiens (Human), this protein is Transcription factor AP-2-delta.